The following is a 334-amino-acid chain: GTP 3',8-cyclase (334 aa).

The Radical SAM core domain occupies 13 to 239 (RFHRKFYYLR…KVKAANDGPA (227 aa)). Arginine 22 is a binding site for GTP. [4Fe-4S] cluster-binding residues include cysteine 29 and cysteine 33. S-adenosyl-L-methionine is bound at residue tyrosine 35. [4Fe-4S] cluster is bound at residue cysteine 36. Arginine 73 provides a ligand contact to GTP. Glycine 77 lines the S-adenosyl-L-methionine pocket. GTP is bound at residue threonine 104. Serine 128 provides a ligand contact to S-adenosyl-L-methionine. Lysine 165 is a binding site for GTP. Methionine 199 lines the S-adenosyl-L-methionine pocket. Residues cysteine 262 and cysteine 265 each contribute to the [4Fe-4S] cluster site. Residue 267 to 269 (RLR) coordinates GTP. Cysteine 279 serves as a coordination point for [4Fe-4S] cluster.

The protein belongs to the radical SAM superfamily. MoaA family. Monomer and homodimer. Requires [4Fe-4S] cluster as cofactor.

The catalysed reaction is GTP + AH2 + S-adenosyl-L-methionine = (8S)-3',8-cyclo-7,8-dihydroguanosine 5'-triphosphate + 5'-deoxyadenosine + L-methionine + A + H(+). It functions in the pathway cofactor biosynthesis; molybdopterin biosynthesis. In terms of biological role, catalyzes the cyclization of GTP to (8S)-3',8-cyclo-7,8-dihydroguanosine 5'-triphosphate. This is GTP 3',8-cyclase from Vibrio vulnificus (strain YJ016).